We begin with the raw amino-acid sequence, 638 residues long: Threonine--tRNA ligase (638 aa).

In terms of domain architecture, TGS spans 1-63 (MVMIQIELPD…TESGRLEIIT (63 aa)). Residues 245 to 536 (DHRRIGRELD…LIEHYAGNFP (292 aa)) are catalytic. The Zn(2+) site is built by cysteine 337, histidine 388, and histidine 513.

It belongs to the class-II aminoacyl-tRNA synthetase family. As to quaternary structure, homodimer. Zn(2+) is required as a cofactor.

The protein resides in the cytoplasm. It catalyses the reaction tRNA(Thr) + L-threonine + ATP = L-threonyl-tRNA(Thr) + AMP + diphosphate + H(+). Catalyzes the attachment of threonine to tRNA(Thr) in a two-step reaction: L-threonine is first activated by ATP to form Thr-AMP and then transferred to the acceptor end of tRNA(Thr). Also edits incorrectly charged L-seryl-tRNA(Thr). The protein is Threonine--tRNA ligase of Syntrophotalea carbinolica (strain DSM 2380 / NBRC 103641 / GraBd1) (Pelobacter carbinolicus).